A 283-amino-acid polypeptide reads, in one-letter code: MAITAAQVKELRDRTGAGMMDCKNALTETDGDIELAIDNMRKSGAAKAAKKAGNIAADGTILIKNGEGFAALLEVNCQTDFVAKDSNFLAFANAVLDVAAASKVSIEDLKAQFEETRVALVTKIGENINVRRVEYIDGANLASYRHGDRIGVVVAGEADEETLKHIAMHVAASKPDFVNPEDVPAELVEREQALQIEIAMNEGKPAEIAEKMVVGRMKKFTGEISLTGQAFIMEPKKTVGEVLKSKGATVTSFIRLEVGEGIEKKAEDFAAEVAAQIAATKKA.

The segment at Thr79 to Val82 is involved in Mg(2+) ion dislocation from EF-Tu.

Belongs to the EF-Ts family.

The protein localises to the cytoplasm. Its function is as follows. Associates with the EF-Tu.GDP complex and induces the exchange of GDP to GTP. It remains bound to the aminoacyl-tRNA.EF-Tu.GTP complex up to the GTP hydrolysis stage on the ribosome. The sequence is that of Elongation factor Ts from Shewanella frigidimarina (strain NCIMB 400).